A 222-amino-acid chain; its full sequence is 7-cyano-7-deazaguanine synthase (222 aa).

Position 14–24 (F14–L24) interacts with ATP. C192, C201, C204, and C207 together coordinate Zn(2+).

Belongs to the QueC family. In terms of assembly, homodimer. It depends on Zn(2+) as a cofactor.

The enzyme catalyses 7-carboxy-7-deazaguanine + NH4(+) + ATP = 7-cyano-7-deazaguanine + ADP + phosphate + H2O + H(+). The protein operates within purine metabolism; 7-cyano-7-deazaguanine biosynthesis. Its function is as follows. Catalyzes the ATP-dependent conversion of 7-carboxy-7-deazaguanine (CDG) to 7-cyano-7-deazaguanine (preQ(0)). The sequence is that of 7-cyano-7-deazaguanine synthase from Clostridium acetobutylicum (strain ATCC 824 / DSM 792 / JCM 1419 / IAM 19013 / LMG 5710 / NBRC 13948 / NRRL B-527 / VKM B-1787 / 2291 / W).